A 433-amino-acid polypeptide reads, in one-letter code: Histidine--tRNA ligase (433 aa).

Belongs to the class-II aminoacyl-tRNA synthetase family. In terms of assembly, homodimer.

Its subcellular location is the cytoplasm. It carries out the reaction tRNA(His) + L-histidine + ATP = L-histidyl-tRNA(His) + AMP + diphosphate + H(+). This is Histidine--tRNA ligase from Blochmanniella floridana.